We begin with the raw amino-acid sequence, 248 residues long: Protein GrpE (248 aa).

A disordered region spans residues 229–248 (AAPKEDTLPAQENQSSPADS). The span at 238–248 (AQENQSSPADS) shows a compositional bias: polar residues.

This sequence belongs to the GrpE family. Homodimer.

It is found in the cytoplasm. Its function is as follows. Participates actively in the response to hyperosmotic and heat shock by preventing the aggregation of stress-denatured proteins, in association with DnaK and GrpE. It is the nucleotide exchange factor for DnaK and may function as a thermosensor. Unfolded proteins bind initially to DnaJ; upon interaction with the DnaJ-bound protein, DnaK hydrolyzes its bound ATP, resulting in the formation of a stable complex. GrpE releases ADP from DnaK; ATP binding to DnaK triggers the release of the substrate protein, thus completing the reaction cycle. Several rounds of ATP-dependent interactions between DnaJ, DnaK and GrpE are required for fully efficient folding. The chain is Protein GrpE from Nostoc sp. (strain PCC 7120 / SAG 25.82 / UTEX 2576).